We begin with the raw amino-acid sequence, 389 residues long: Putative RNA methyltransferase R405 (389 aa).

3 residues coordinate S-adenosyl-L-methionine: Q207, D261, and D314. The active-site Nucleophile is C342.

This sequence belongs to the class I-like SAM-binding methyltransferase superfamily. RNA M5U methyltransferase family.

This chain is Putative RNA methyltransferase R405, found in Acanthamoeba polyphaga (Amoeba).